A 215-amino-acid chain; its full sequence is Probable phosphoglycerate mutase GpmB (215 aa).

Substrate-binding positions include arginine 8 to asparagine 15, glutamine 21 to glycine 22, arginine 58, lysine 60, glutamate 82 to methionine 85, arginine 104 to arginine 105, and glycine 151 to isoleucine 152. Catalysis depends on histidine 9, which acts as the Tele-phosphohistidine intermediate. Glutamate 82 functions as the Proton donor/acceptor in the catalytic mechanism.

It belongs to the phosphoglycerate mutase family. GpmB subfamily.

It carries out the reaction (2R)-2-phosphoglycerate = (2R)-3-phosphoglycerate. Its pathway is carbohydrate degradation; glycolysis; pyruvate from D-glyceraldehyde 3-phosphate: step 3/5. The sequence is that of Probable phosphoglycerate mutase GpmB from Salmonella paratyphi A (strain AKU_12601).